The primary structure comprises 555 residues: F-box protein COS111 (555 aa).

Disordered stretches follow at residues 31–82 (MSVS…SVSN) and 124–147 (DHSI…KQHH). The span at 32–42 (SVSSRSSQEES) shows a compositional bias: low complexity. Polar residues predominate over residues 48-61 (ESVSSLSMQEQQTE). A compositionally biased stretch (low complexity) spans 129 to 142 (SGVTRSTVSTVRPT). The F-box domain occupies 196–246 (HKDLNSLPHEIMSKIVSHLDQRDVTMCLYVNKNMYSTAVRQLYKEPFFSST). Low complexity predominate over residues 327–346 (SSSSLSCSRTSSNSNSSTES). Residues 327–354 (SSSSLSCSRTSSNSNSSTESKPVKKRRS) are disordered.

In terms of biological role, F-box protein probably involved in ubiquitin conjugation pathway. The protein is F-box protein COS111 (COS111) of Yarrowia lipolytica (strain CLIB 122 / E 150) (Yeast).